Consider the following 304-residue polypeptide: Olfactory receptor 52A4 (304 aa).

The Extracellular portion of the chain corresponds to 1–32 (MALPITNGTLFMPFVLTFIGIPGFESVQCWIG). An N-linked (GlcNAc...) asparagine glycan is attached at N7. The chain crosses the membrane as a helical span at residues 33–53 (IPFCATYVIALIGNSLLLIII). At 54-61 (KSEPSLHE) the chain is on the cytoplasmic side. Residues 62 to 82 (PMYIFLATLGATDISLSTSIV) traverse the membrane as a helical segment. At 83-103 (PKMLDIFWFHLPEIYFDACLF) the chain is on the extracellular side. The cysteines at positions 101 and 184 are disulfide-linked. A helical membrane pass occupies residues 104–124 (QMWLIHTFQGIESGVLLAMAL). Over 125 to 146 (DRCVAICYPLRRAIVFTRQLVT) the chain is Cytoplasmic. The helical transmembrane segment at 147 to 167 (YIVVGVTLRPAILVIPCLLLI) threads the bilayer. Over 168 to 203 (KCHLKLYRTKLIYHTYCERVALVKLATEDVYINKVY) the chain is Extracellular. The helical transmembrane segment at 204–224 (GILGAFIVGGLDFIFITLSYI) threads the bilayer. Over 225–255 (QIFITVFHLPLKEARLKVFNTCIPHIYVFFQ) the chain is Cytoplasmic. The chain crosses the membrane as a helical span at residues 256-276 (FYLLAFFFIFYSQIWILYPII). Residues 277–279 (CTY) lie on the Extracellular side of the membrane. Residues 280–300 (HLVQSLPTGPTIPQPLYLWVK) form a helical membrane-spanning segment. Topologically, residues 301 to 304 (DQTH) are cytoplasmic.

It belongs to the G-protein coupled receptor 1 family.

It is found in the cell membrane. Functionally, odorant receptor. This is Olfactory receptor 52A4 from Homo sapiens (Human).